The following is an 85-amino-acid chain: MKKVLLLITAILAVAVGFPVSQDQEREKRSISDSDELASGFFVFPYPYPFRPLPPIPFPRFPWFRRNFPIPIPESAPTTPLPSEK.

The first 17 residues, 1 to 17 (MKKVLLLITAILAVAVG), serve as a signal peptide directing secretion. The interval 75–83 (SAPTTPLPS) is O-glycosylated at one site.

Post-translationally, O-glycosylated with core 1 or possibly core 8 glycans. Abundantly expressed in tonsil, lymph node, and trachea; strong expression in prostate; lower expression in thyroid, stomach, and colon.

It localises to the secreted. In terms of biological role, can bind to the surface of B-lymphoma cells, but not T-lymphoma cells, consistent with a function as a secreted mediator acting upon B-cells. The protein is Follicular dendritic cell secreted peptide (FDCSP) of Homo sapiens (Human).